A 390-amino-acid polypeptide reads, in one-letter code: 23S rRNA (uracil(747)-C(5))-methyltransferase RlmC (390 aa).

[4Fe-4S] cluster is bound by residues C12, C20, C23, and C100. The S-adenosyl-L-methionine site is built by Q225, F254, E275, and N322. Residue C349 is the Nucleophile of the active site.

It belongs to the class I-like SAM-binding methyltransferase superfamily. RNA M5U methyltransferase family. RlmC subfamily.

The catalysed reaction is uridine(747) in 23S rRNA + S-adenosyl-L-methionine = 5-methyluridine(747) in 23S rRNA + S-adenosyl-L-homocysteine + H(+). Functionally, catalyzes the formation of 5-methyl-uridine at position 747 (m5U747) in 23S rRNA. This chain is 23S rRNA (uracil(747)-C(5))-methyltransferase RlmC, found in Shewanella baltica (strain OS223).